The sequence spans 370 residues: Propane 2-monooxygenase, reductase component (370 aa).

Positions 1-14 are enriched in basic residues; the sequence is MAPRPLRRHPPLHH. Residues 1–21 form a disordered region; the sequence is MAPRPLRRHPPLHHSFHESRR. Residues 28 to 118 form the 2Fe-2S ferredoxin-type domain; the sequence is HRINFEPVDI…DCTIELLNFD (91 aa). Residues C62, C67, C70, and C102 each coordinate [2Fe-2S] cluster. The FAD-binding FR-type domain occupies 128 to 229; that stretch reads IQDVRTRVTR…TGPYGSFTIK (102 aa).

It belongs to the TmoA/XamoA family. As to quaternary structure, the propane 2-monooxygenase multicomponent enzyme system is composed of an electron transfer component and a monooxygenase component interacting with the effector protein PrmD. The electron transfer component is composed of a reductase (PrmB), and the monooxygenase component is formed by a large subunit (PrmA) and a small subunit (PrmC). FAD serves as cofactor. [2Fe-2S] cluster is required as a cofactor.

Reductase component of the propane 2-monooxygenase multicomponent enzyme system which is involved in the degradation of propane via the O2-dependent hydroxylation of propane. Reductase catalyzes the transfer of electrons from NADH or NADPH to monooxygenase. The polypeptide is Propane 2-monooxygenase, reductase component (Rhodococcus jostii (strain RHA1)).